A 206-amino-acid polypeptide reads, in one-letter code: Photosynthetic reaction center cytochrome c-551 (206 aa).

A run of 3 helical transmembrane segments spans residues isoleucine 10–leucine 30, phenylalanine 49–methionine 69, and lysine 76–leucine 96. The heme site is built by cysteine 152, cysteine 155, histidine 156, and methionine 182.

Component of the photosynthetic reaction center. The reaction center interacts with the Fenna-Matthews-Olson (FMO, fmoA) complex. Post-translationally, binds 1 heme group per subunit.

Its subcellular location is the cell inner membrane. Its function is as follows. Monoheme cytochrome which is the immediate electron donor to P840 of the photosynthetic reaction center complex. This is Photosynthetic reaction center cytochrome c-551 (pscC) from Chlorobaculum parvum (strain DSM 263 / NCIMB 8327) (Chlorobium vibrioforme subsp. thiosulfatophilum).